Here is a 143-residue protein sequence, read N- to C-terminus: UPF0179 protein PTO0851 (143 aa).

It belongs to the UPF0179 family.

The protein is UPF0179 protein PTO0851 of Picrophilus torridus (strain ATCC 700027 / DSM 9790 / JCM 10055 / NBRC 100828 / KAW 2/3).